Reading from the N-terminus, the 344-residue chain is MIKVGIVGGTGYTGVELLRLLAQHPQAEVAVITSRSEAGVAVADMYPNLRGHYDGLTFSVPDSKTLGACDVVFFATPHGVAHALAGELLAAGTKVIDLSADFRLQDAAEWGKWYGQPHGAPELLKDAVYGLPEVNREKIRQARLIAVPGCYPTATQLGFLPLLEAGLADPARLIADCKSGVSGAGRGAAVGSLFCEAGESMKAYAVKGHRHLPEISQGLRLAAGKDVGLTFVPHLTPMIRGIHATLYATVADTSVDLQALFEKRYANEPFVDVMPAGSHPETRSVRGANVCRIAVHRPQGGDLVVVLSVIDNLVKGASGQAVQNLNILFGLDERMGLAHAGLLP.

Residue Cys-150 is part of the active site.

Belongs to the NAGSA dehydrogenase family. Type 1 subfamily.

The protein localises to the cytoplasm. It catalyses the reaction N-acetyl-L-glutamate 5-semialdehyde + phosphate + NADP(+) = N-acetyl-L-glutamyl 5-phosphate + NADPH + H(+). It participates in amino-acid biosynthesis; L-arginine biosynthesis; N(2)-acetyl-L-ornithine from L-glutamate: step 3/4. Its function is as follows. Catalyzes the NADPH-dependent reduction of N-acetyl-5-glutamyl phosphate to yield N-acetyl-L-glutamate 5-semialdehyde. This chain is N-acetyl-gamma-glutamyl-phosphate reductase, found in Pseudomonas entomophila (strain L48).